Consider the following 200-residue polypeptide: MTDLALIDAGGANLGSVRYALERLGVEARVVRDAQGLQGAERVILPGVGAAPEAMARLRAQGLIEPLQQLQVPLIGICLGMQLLFEHSEEGDVDCLGMLPGIVRHMTPALGIRVPHMGWNQLVPMRDSALLAGLPERASAYFVHGYAAPVTADTVAACDHGGLFTAVVQSGLRCGAQFHPERSADTGARILRNFLEMSFP.

One can recognise a Glutamine amidotransferase type-1 domain in the interval 3–200 (DLALIDAGGA…LRNFLEMSFP (198 aa)). The active-site Nucleophile is the Cys78. Catalysis depends on residues His179 and Glu181.

Heterodimer of HisH and HisF.

The protein resides in the cytoplasm. It carries out the reaction 5-[(5-phospho-1-deoxy-D-ribulos-1-ylimino)methylamino]-1-(5-phospho-beta-D-ribosyl)imidazole-4-carboxamide + L-glutamine = D-erythro-1-(imidazol-4-yl)glycerol 3-phosphate + 5-amino-1-(5-phospho-beta-D-ribosyl)imidazole-4-carboxamide + L-glutamate + H(+). It catalyses the reaction L-glutamine + H2O = L-glutamate + NH4(+). It participates in amino-acid biosynthesis; L-histidine biosynthesis; L-histidine from 5-phospho-alpha-D-ribose 1-diphosphate: step 5/9. Functionally, IGPS catalyzes the conversion of PRFAR and glutamine to IGP, AICAR and glutamate. The HisH subunit catalyzes the hydrolysis of glutamine to glutamate and ammonia as part of the synthesis of IGP and AICAR. The resulting ammonia molecule is channeled to the active site of HisF. The chain is Imidazole glycerol phosphate synthase subunit HisH from Xanthomonas campestris pv. campestris (strain 8004).